The primary structure comprises 147 residues: Hemoglobin subunit epsilon-4 (147 aa).

The 145-residue stretch at histidine 3–histidine 147 folds into the Globin domain. The heme b site is built by histidine 64 and histidine 93.

This sequence belongs to the globin family. Red blood cells.

Functionally, hemoglobin epsilon chain is a beta-type chain found in early embryos. In Bos taurus (Bovine), this protein is Hemoglobin subunit epsilon-4 (HBE4).